A 180-amino-acid polypeptide reads, in one-letter code: PRA1 family protein F1 (180 aa).

The next 4 helical transmembrane spans lie at Ala-63–Ser-83, Leu-84–Leu-104, Ile-123–Leu-143, and Ile-145–Thr-165.

Belongs to the PRA1 family. As to quaternary structure, interacts with PRA1F2. In terms of tissue distribution, expressed in hypocotyls, leaf bases and shoot apex.

Its subcellular location is the endosome membrane. In terms of biological role, may be involved in both secretory and endocytic intracellular trafficking in the endosomal/prevacuolar compartments. This chain is PRA1 family protein F1 (PRA1F1), found in Arabidopsis thaliana (Mouse-ear cress).